A 252-amino-acid chain; its full sequence is Phosphatidylserine decarboxylase proenzyme (252 aa).

Catalysis depends on serine 211, which acts as the Schiff-base intermediate with substrate; via pyruvic acid. At serine 211 the chain carries Pyruvic acid (Ser); by autocatalysis.

The protein belongs to the phosphatidylserine decarboxylase family. PSD-A subfamily. In terms of assembly, heterodimer of a large membrane-associated beta subunit and a small pyruvoyl-containing alpha subunit. Pyruvate is required as a cofactor. Is synthesized initially as an inactive proenzyme. Formation of the active enzyme involves a self-maturation process in which the active site pyruvoyl group is generated from an internal serine residue via an autocatalytic post-translational modification. Two non-identical subunits are generated from the proenzyme in this reaction, and the pyruvate is formed at the N-terminus of the alpha chain, which is derived from the carboxyl end of the proenzyme. The post-translation cleavage follows an unusual pathway, termed non-hydrolytic serinolysis, in which the side chain hydroxyl group of the serine supplies its oxygen atom to form the C-terminus of the beta chain, while the remainder of the serine residue undergoes an oxidative deamination to produce ammonia and the pyruvoyl prosthetic group on the alpha chain.

The protein resides in the cell membrane. The catalysed reaction is a 1,2-diacyl-sn-glycero-3-phospho-L-serine + H(+) = a 1,2-diacyl-sn-glycero-3-phosphoethanolamine + CO2. It functions in the pathway phospholipid metabolism; phosphatidylethanolamine biosynthesis; phosphatidylethanolamine from CDP-diacylglycerol: step 2/2. Its function is as follows. Catalyzes the formation of phosphatidylethanolamine (PtdEtn) from phosphatidylserine (PtdSer). The sequence is that of Phosphatidylserine decarboxylase proenzyme from Novosphingobium aromaticivorans (strain ATCC 700278 / DSM 12444 / CCUG 56034 / CIP 105152 / NBRC 16084 / F199).